A 245-amino-acid polypeptide reads, in one-letter code: UDP-N-acetyl-D-mannosaminuronic acid transferase (245 aa).

It belongs to the glycosyltransferase 26 family.

The enzyme catalyses UDP-N-acetyl-alpha-D-mannosaminouronate + N-acetyl-alpha-D-glucosaminyl-di-trans,octa-cis-undecaprenyl diphosphate = beta-D-ManNAcA-(1-&gt;4)-alpha-D-GlcNAc-di-trans,octa-cis-undecaprenyl diphosphate + UDP + H(+). Its pathway is bacterial outer membrane biogenesis; enterobacterial common antigen biosynthesis. Its function is as follows. Catalyzes the synthesis of Und-PP-GlcNAc-ManNAcA (Lipid II), the second lipid-linked intermediate involved in enterobacterial common antigen (ECA) synthesis. This Photorhabdus laumondii subsp. laumondii (strain DSM 15139 / CIP 105565 / TT01) (Photorhabdus luminescens subsp. laumondii) protein is UDP-N-acetyl-D-mannosaminuronic acid transferase.